Reading from the N-terminus, the 860-residue chain is Leucine--tRNA ligase (860 aa).

Positions 42 to 52 match the 'HIGH' region motif; that stretch reads PYPSGRLHMGH. The 'KMSKS' region motif lies at 619–623; sequence KMSKS. Lys-622 contributes to the ATP binding site.

It belongs to the class-I aminoacyl-tRNA synthetase family.

It is found in the cytoplasm. The enzyme catalyses tRNA(Leu) + L-leucine + ATP = L-leucyl-tRNA(Leu) + AMP + diphosphate. This Histophilus somni (strain 2336) (Haemophilus somnus) protein is Leucine--tRNA ligase.